The primary structure comprises 157 residues: Glucosamine 6-phosphate N-acetyltransferase 1 (157 aa).

The 149-residue stretch at 9-157 folds into the N-acetyltransferase domain; that stretch reads ISFRPLDIDD…SIYLPTPPKL (149 aa). Substrate-binding positions include Thr-31, 78–81, and 90–92; these read KFIR and EDI. Acetyl-CoA is bound at residue 100–105; that stretch reads GKNLGL. Position 121 to 122 (121 to 122) interacts with substrate; it reads YK. Residue 135–137 coordinates acetyl-CoA; that stretch reads YEK.

It belongs to the acetyltransferase family. GNA1 subfamily.

It catalyses the reaction D-glucosamine 6-phosphate + acetyl-CoA = N-acetyl-D-glucosamine 6-phosphate + CoA + H(+). Its pathway is nucleotide-sugar biosynthesis; UDP-N-acetyl-alpha-D-glucosamine biosynthesis; N-acetyl-alpha-D-glucosamine 1-phosphate from alpha-D-glucosamine 6-phosphate (route I): step 1/2. This chain is Glucosamine 6-phosphate N-acetyltransferase 1 (gna1), found in Dictyostelium discoideum (Social amoeba).